The primary structure comprises 264 residues: Thiazole synthase (264 aa).

The active-site Schiff-base intermediate with DXP is Lys-104. Residues Gly-165, 191-192 (AG), and 213-214 (NT) contribute to the 1-deoxy-D-xylulose 5-phosphate site.

This sequence belongs to the ThiG family. Homotetramer. Forms heterodimers with either ThiH or ThiS.

It is found in the cytoplasm. The enzyme catalyses [ThiS sulfur-carrier protein]-C-terminal-Gly-aminoethanethioate + 2-iminoacetate + 1-deoxy-D-xylulose 5-phosphate = [ThiS sulfur-carrier protein]-C-terminal Gly-Gly + 2-[(2R,5Z)-2-carboxy-4-methylthiazol-5(2H)-ylidene]ethyl phosphate + 2 H2O + H(+). Its pathway is cofactor biosynthesis; thiamine diphosphate biosynthesis. Its function is as follows. Catalyzes the rearrangement of 1-deoxy-D-xylulose 5-phosphate (DXP) to produce the thiazole phosphate moiety of thiamine. Sulfur is provided by the thiocarboxylate moiety of the carrier protein ThiS. In vitro, sulfur can be provided by H(2)S. This chain is Thiazole synthase, found in Oleidesulfovibrio alaskensis (strain ATCC BAA-1058 / DSM 17464 / G20) (Desulfovibrio alaskensis).